The sequence spans 923 residues: Immunomodulating metalloprotease (923 aa).

An N-terminal signal peptide occupies residues 1–41; sequence MSLSTTAFPSLQGENMSRSPIPRHRALLAGFCLAGALSAQA. The 345-residue stretch at 450–794 folds into the Peptidase M60 domain; it reads QGFTAIGRMA…FYTQWVHYWA (345 aa). Residue His696 coordinates Zn(2+). The active site involves Glu697. His700 lines the Zn(2+) pocket.

It belongs to the peptidase M88 family. Zn(2+) serves as cofactor.

It is found in the secreted. With respect to regulation, proteolytic activity is blocked in the presence of EDTA. Protease that degrades several proteins of the host immune system. Cleaves P-selectin glycoprotein ligand-1 (PSGL-1), leading to its functional inhibition; PSGL-1 is a leukocyte cell-surface receptor essential for leukocyte recruitment to the site of infection. Next to PSGL-1, targets host CD43 and CD44 that are also involved in leukocyte homing. Thus, prevents neutrophil extravasation and thereby protects P.aeruginosa from neutrophil attack. Is also able to inhibit the decay accelerating factor (CD55), but not the cell-surface receptors CD46 and CD31. This Pseudomonas aeruginosa (strain ATCC 15692 / DSM 22644 / CIP 104116 / JCM 14847 / LMG 12228 / 1C / PRS 101 / PAO1) protein is Immunomodulating metalloprotease.